The following is a 566-amino-acid chain: Cytokine-like nuclear factor N-PAC (566 aa).

A PWWP domain is found at 9–70; that stretch reads VNDLVWAKMK…ETQIKPYLQF (62 aa). Disordered regions lie at residues 127–147 and 206–234; these read VASG…NTTT and MLDD…SSLD. The segment at 274–566 is dehydrogenase domain; the sequence is RNIKASQLKF…ASAVYVRARF (293 aa). NAD(+)-binding positions include 284–298 and K518; that span reads GFLG…IVKN.

This sequence belongs to the HIBADH-related family. NP60 subfamily. As to quaternary structure, binds to mononucleosomes. Interacts with male-specific lethal (MSL) histone acetyltransferase complex at least composed of mof, msl-1, msl-2 and msl-3.

Its subcellular location is the chromosome. Its function is as follows. May have oxidoreductase activity. The polypeptide is Cytokine-like nuclear factor N-PAC (Anopheles gambiae (African malaria mosquito)).